A 158-amino-acid chain; its full sequence is uncharacterized protein (158 aa).

Disordered stretches follow at residues 1–86 and 138–158; these read MDFR…DHWW and ASQV…LLGF. Positions 7–76 are enriched in low complexity; the sequence is SPTTCTTPAS…PTPASSGSAA (70 aa).

This is an uncharacterized protein from Homo sapiens (Human).